The primary structure comprises 184 residues: NADH-quinone oxidoreductase subunit B (184 aa).

Positions 37, 38, 103, and 132 each coordinate [4Fe-4S] cluster.

The protein belongs to the complex I 20 kDa subunit family. As to quaternary structure, NDH-1 is composed of 14 different subunits. Subunits NuoB, C, D, E, F, and G constitute the peripheral sector of the complex. [4Fe-4S] cluster is required as a cofactor.

The protein resides in the cell membrane. The enzyme catalyses a quinone + NADH + 5 H(+)(in) = a quinol + NAD(+) + 4 H(+)(out). NDH-1 shuttles electrons from NADH, via FMN and iron-sulfur (Fe-S) centers, to quinones in the respiratory chain. The immediate electron acceptor for the enzyme in this species is believed to be a menaquinone. Couples the redox reaction to proton translocation (for every two electrons transferred, four hydrogen ions are translocated across the cytoplasmic membrane), and thus conserves the redox energy in a proton gradient. The chain is NADH-quinone oxidoreductase subunit B from Rhodococcus jostii (strain RHA1).